The sequence spans 84 residues: Anaphase-promoting complex subunit 11 (84 aa).

The Zn(2+) site is built by Cys-23, Cys-26, Cys-34, Cys-37, Cys-44, Cys-51, His-53, His-56, His-58, Cys-59, Cys-73, and Cys-76. An RING-type zinc finger spans residues 34–77; the sequence is CPDCKVPGDDCPLVWGQCSHCFHMHCILKWLNAQQVQQHCPMCR.

This sequence belongs to the RING-box family. The mammalian APC/C is composed at least of 14 distinct subunits ANAPC1, ANAPC2, CDC27/APC3, ANAPC4, ANAPC5, CDC16/APC6, ANAPC7, CDC23/APC8, ANAPC10, ANAPC11, CDC26/APC12, ANAPC13, ANAPC15 and ANAPC16 that assemble into a complex of at least 19 chains with a combined molecular mass of around 1.2 MDa; APC/C interacts with FZR1 and FBXO5. Interacts with the cullin domain of ANAPC2. Interacts with UBE2D2. Auto-ubiquitinated.

The protein localises to the cytoplasm. It localises to the nucleus. The protein operates within protein modification; protein ubiquitination. Together with the cullin protein ANAPC2, constitutes the catalytic component of the anaphase promoting complex/cyclosome (APC/C), a cell cycle-regulated E3 ubiquitin ligase that controls progression through mitosis and the G1 phase of the cell cycle. The APC/C complex acts by mediating ubiquitination and subsequent degradation of target proteins: it mainly mediates the formation of 'Lys-11'-linked polyubiquitin chains and, to a lower extent, the formation of 'Lys-48'- and 'Lys-63'-linked polyubiquitin chains. The APC/C complex catalyzes assembly of branched 'Lys-11'-/'Lys-48'-linked branched ubiquitin chains on target proteins. May recruit the E2 ubiquitin-conjugating enzymes to the complex. The polypeptide is Anaphase-promoting complex subunit 11 (ANAPC11) (Bos taurus (Bovine)).